The sequence spans 425 residues: Type I restriction enzyme MjaVIII specificity subunit (425 aa).

This sequence belongs to the type-I restriction system S methylase family. The type I restriction/modification system is composed of three polypeptides R, M and S.

Functionally, the specificity (S) subunit of a type I restriction enzyme; this subunit dictates DNA sequence specificity. The M and S subunits together form a methyltransferase (MTase) that methylates A-2 on the top and A-3 on the bottom strand of the sequence 5'-GAYN(5)GTAA-3'. In the presence of the R subunit the complex can also act as an endonuclease, binding to the same target sequence but cutting the DNA some distance from this site. Whether the DNA is cut or modified depends on the methylation state of the target sequence. When the target site is unmodified, the DNA is cut. When the target site is hemimethylated, the complex acts as a maintenance MTase modifying the DNA so that both strands become methylated. After locating a non-methylated recognition site, the enzyme complex serves as a molecular motor that translocates DNA in an ATP-dependent manner until a collision occurs that triggers cleavage. This chain is Type I restriction enzyme MjaVIII specificity subunit, found in Methanocaldococcus jannaschii (strain ATCC 43067 / DSM 2661 / JAL-1 / JCM 10045 / NBRC 100440) (Methanococcus jannaschii).